The chain runs to 365 residues: Spermidine-binding periplasmic protein SpuE (365 aa).

Residues Met1–Ala24 form the signal peptide. Spermidine is bound by residues Thr35, Glu181, Asp242, and Asn269.

Belongs to the bacterial solute-binding protein PotD/PotF family.

Its subcellular location is the periplasm. Functionally, spermidine-binding protein probably required for its uptake into cells. Binds spermidine with high affinity (KD=14.3 nM). Does not bind putrescine, cadaverine or spermine. Spermidine binding induces large inter-domain conformational changes. Implicated in induction of type 3 secretion systems (T3SS), which play a role in virulence. This chain is Spermidine-binding periplasmic protein SpuE (spuE), found in Pseudomonas aeruginosa (strain ATCC 15692 / DSM 22644 / CIP 104116 / JCM 14847 / LMG 12228 / 1C / PRS 101 / PAO1).